Here is a 173-residue protein sequence, read N- to C-terminus: Large ribosomal subunit protein uL16 (173 aa).

It belongs to the universal ribosomal protein uL16 family.

The polypeptide is Large ribosomal subunit protein uL16 (Methanococcus aeolicus (strain ATCC BAA-1280 / DSM 17508 / OCM 812 / Nankai-3)).